The sequence spans 391 residues: S-adenosylmethionine synthase (391 aa).

His14 is a binding site for ATP. A Mg(2+)-binding site is contributed by Asp16. Glu42 serves as a coordination point for K(+). Glu55 and Gln98 together coordinate L-methionine. The interval Gln98–Glu108 is flexible loop. ATP contacts are provided by residues Asp172–Lys174, Arg238–Phe239, Asp247, Arg253–Lys254, Ala270, and Lys274. L-methionine is bound at residue Asp247. L-methionine is bound at residue Lys278.

Belongs to the AdoMet synthase family. In terms of assembly, homotetramer; dimer of dimers. The cofactor is Mg(2+). K(+) serves as cofactor.

It is found in the cytoplasm. The catalysed reaction is L-methionine + ATP + H2O = S-adenosyl-L-methionine + phosphate + diphosphate. Its pathway is amino-acid biosynthesis; S-adenosyl-L-methionine biosynthesis; S-adenosyl-L-methionine from L-methionine: step 1/1. Catalyzes the formation of S-adenosylmethionine (AdoMet) from methionine and ATP. The overall synthetic reaction is composed of two sequential steps, AdoMet formation and the subsequent tripolyphosphate hydrolysis which occurs prior to release of AdoMet from the enzyme. The chain is S-adenosylmethionine synthase from Clostridium botulinum (strain Langeland / NCTC 10281 / Type F).